The sequence spans 207 residues: Large ribosomal subunit protein uL4 (207 aa).

Residues 56-76 (EVRGGGRKPWRQKGTGRARAG) are disordered. Over residues 60–71 (GGRKPWRQKGTG) the composition is skewed to basic residues.

It belongs to the universal ribosomal protein uL4 family. In terms of assembly, part of the 50S ribosomal subunit.

Functionally, one of the primary rRNA binding proteins, this protein initially binds near the 5'-end of the 23S rRNA. It is important during the early stages of 50S assembly. It makes multiple contacts with different domains of the 23S rRNA in the assembled 50S subunit and ribosome. In terms of biological role, forms part of the polypeptide exit tunnel. This is Large ribosomal subunit protein uL4 from Desulfitobacterium hafniense (strain Y51).